A 388-amino-acid chain; its full sequence is Calreticulin (388 aa).

A signal peptide spans 1-17; sequence MQLSLLVGLVCFSAINA. C103 and C135 are oxidised to a cystine. The an alpha-D-glucoside site is built by Y107, K109, Y126, and D133. 7 consecutive repeat copies span residues 189–200, 208–219, 225–236, 242–253, 257–267, 271–281, and 285–295. The tract at residues 189-253 is 4 X approximate repeats; that stretch reads AESGELEADW…DAKKPEDWDD (65 aa). A disordered region spans residues 193–282; it reads ELEADWDFLP…WKPKQKKNPA (90 aa). Over residues 205–215 the composition is skewed to basic and acidic residues; the sequence is KIKDPDAKKPE. Residues 216–227 are compositionally biased toward acidic residues; sequence DWDEREFIDDED. The segment covering 228-249 has biased composition (basic and acidic residues); sequence DKKPEDWDKPEHIPDPDAKKPE. Acidic residues predominate over residues 250–259; the sequence is DWDDEMDGEW. Positions 257-295 are 3 X approximate repeats; it reads GEWEPPMVDNPEYKGEWKPKQKKNPAYKGKWIHPEIEIP. An alpha-D-glucoside is bound at residue D315. Residues 349 to 388 are disordered; that stretch reads REGEKKKGKKTKKQKKKEKNEKIKKEKMKKRKRANRKKKK. 2 stretches are compositionally biased toward basic residues: residues 354–365 and 373–388; these read KKGKKTKKQKKK and KEKM…KKKK.

It belongs to the calreticulin family.

It is found in the endoplasmic reticulum lumen. Molecular calcium-binding chaperone promoting folding, oligomeric assembly and quality control in the ER via the calreticulin/calnexin cycle. This lectin may interact transiently with almost all of the monoglucosylated glycoproteins that are synthesized in the ER. The sequence is that of Calreticulin (crt-1) from Onchocerca volvulus.